We begin with the raw amino-acid sequence, 524 residues long: MPAASELERRTKRSKSRNKISKPIANMLSVIAFSICISPIVYFLIRSIYYLVFHPLSDYPGPKLWAISRIPWNYVNLQGDLAWRIRDMHLHYNSSVIRIAPDELSYTSSTALKKIDGTPPPREFLKCLDGRGIAPAVVNRRRSIVTETPERHTILRRALQPAFSERALRDQEDFFRDHTDRLIAQLRKPQYGVTEQNILRWFALLSFDIMSDLAFGQPAGCLDLVDEPWLGVIGSRVKSIVWYQFAVYYRIEWILKWIMPKAAMEARKRHQALTLQKVQRRIEEERSGKREGKKRDFMSYILGNDKENLSNMDLFGMASAFIVAGSNTTTYTMTAFTFFVCRDSEVYAKVIAEVRDKFASDTDITMVAAGDLPYLKACIEETMRLSPPTPSALPRWVLEGGEEIDGKWVPGGVTVGVHNLAACHVPWNWHRPLEFIPERWLQTKEGEFTHDDRALHARFLMVDIMSLTCFLSSMAMNEMRLALAKLFWNFDISLSRNSGNWWITQKSYLVWEKKPLMVTIKPRH.

The chain crosses the membrane as a helical span at residues 24-44 (IANMLSVIAFSICISPIVYFL). Cysteine 469 serves as a coordination point for heme.

It belongs to the cytochrome P450 family. It depends on heme as a cofactor.

It is found in the membrane. The protein operates within secondary metabolite biosynthesis. Cytochrome P450 monooxygenase; part of the gene cluster that mediates the biosynthesis of alternapyrone derivatives. Alternapyrone is a decaketide with octa-methylation from methionine on every C2 unit except the third unit. All the domains in the polyketide synthase alt5 are apparently involved in alternapyrone synthesis, that is, the 8 CMeT, 7 KR, 7 DH, and 4 ER reactions in the 9 KS-mediated condensation steps required for alternapyrone synthesis. the alternapyrone produced by alt5 might be intensively modified by cytochrome P450 monooxygenases alt1, alt2 and alt3 and FAD-dependent oxidoreductase alt4 present in the alt gene cluster. The sequence is that of Cytochrome P450 monooxygenase alt1 from Alternaria solani.